The chain runs to 247 residues: 1-(5-phosphoribosyl)-5-[(5-phosphoribosylamino)methylideneamino] imidazole-4-carboxamide isomerase (247 aa).

D8 functions as the Proton acceptor in the catalytic mechanism. Residue D129 is the Proton donor of the active site.

Belongs to the HisA/HisF family.

Its subcellular location is the cytoplasm. The enzyme catalyses 1-(5-phospho-beta-D-ribosyl)-5-[(5-phospho-beta-D-ribosylamino)methylideneamino]imidazole-4-carboxamide = 5-[(5-phospho-1-deoxy-D-ribulos-1-ylimino)methylamino]-1-(5-phospho-beta-D-ribosyl)imidazole-4-carboxamide. The protein operates within amino-acid biosynthesis; L-histidine biosynthesis; L-histidine from 5-phospho-alpha-D-ribose 1-diphosphate: step 4/9. The chain is 1-(5-phosphoribosyl)-5-[(5-phosphoribosylamino)methylideneamino] imidazole-4-carboxamide isomerase from Rhodospirillum centenum (strain ATCC 51521 / SW).